The chain runs to 84 residues: Putative UPF0320 protein YAL068W-A (84 aa).

It belongs to the UPF0320 family.

In Saccharomyces cerevisiae (strain ATCC 204508 / S288c) (Baker's yeast), this protein is Putative UPF0320 protein YAL068W-A.